A 204-amino-acid polypeptide reads, in one-letter code: LexA repressor (204 aa).

The segment at residues 27-47 (VREIGEAVGLASSSTVHGHLA) is a DNA-binding region (H-T-H motif). Residues Ser-126 and Lys-164 each act as for autocatalytic cleavage activity in the active site.

This sequence belongs to the peptidase S24 family. As to quaternary structure, homodimer.

The catalysed reaction is Hydrolysis of Ala-|-Gly bond in repressor LexA.. Its function is as follows. Represses a number of genes involved in the response to DNA damage (SOS response), including recA and lexA. In the presence of single-stranded DNA, RecA interacts with LexA causing an autocatalytic cleavage which disrupts the DNA-binding part of LexA, leading to derepression of the SOS regulon and eventually DNA repair. This is LexA repressor from Listeria innocua serovar 6a (strain ATCC BAA-680 / CLIP 11262).